A 960-amino-acid polypeptide reads, in one-letter code: Endosome/lysosome-associated apoptosis and autophagy regulator family member 2 (960 aa).

The segment at methionine 1–serine 26 is disordered. The N-terminal stretch at methionine 1–alanine 44 is a signal peptide. The Extracellular segment spans residues alanine 45 to lysine 860. Asparagine 171 carries N-linked (GlcNAc...) asparagine glycosylation. 3 disulfides stabilise this stretch: cysteine 295–cysteine 312, cysteine 325–cysteine 348, and cysteine 328–cysteine 360. Residues asparagine 407 and asparagine 622 are each glycosylated (N-linked (GlcNAc...) asparagine). Residues proline 597–leucine 808 form the MRH domain. Disulfide bonds link cysteine 599–cysteine 651, cysteine 661–cysteine 689, cysteine 758–cysteine 794, and cysteine 770–cysteine 806. The chain crosses the membrane as a helical span at residues valine 861 to tryptophan 881. The Cytoplasmic segment spans residues lysine 882–isoleucine 960. Serine 949 bears the Phosphoserine mark.

The protein belongs to the ELAPOR family.

It is found in the cell membrane. Functions as a regulator of the BMP signaling pathway and may be involved in epidermal differentiation. The polypeptide is Endosome/lysosome-associated apoptosis and autophagy regulator family member 2 (Bos taurus (Bovine)).